The sequence spans 159 residues: 3-hydroxyacyl-[acyl-carrier-protein] dehydratase FabZ (159 aa).

The active site involves H58.

This sequence belongs to the thioester dehydratase family. FabZ subfamily.

Its subcellular location is the cytoplasm. It catalyses the reaction a (3R)-hydroxyacyl-[ACP] = a (2E)-enoyl-[ACP] + H2O. In terms of biological role, involved in unsaturated fatty acids biosynthesis. Catalyzes the dehydration of short chain beta-hydroxyacyl-ACPs and long chain saturated and unsaturated beta-hydroxyacyl-ACPs. This Helicobacter pylori (strain J99 / ATCC 700824) (Campylobacter pylori J99) protein is 3-hydroxyacyl-[acyl-carrier-protein] dehydratase FabZ.